We begin with the raw amino-acid sequence, 152 residues long: Transcriptional regulator MraZ (152 aa).

SpoVT-AbrB domains follow at residues 5 to 52 (ATLV…PLPE) and 81 to 124 (ASEC…DETT).

It belongs to the MraZ family. Forms oligomers.

It is found in the cytoplasm. It localises to the nucleoid. Functionally, negatively regulates its own expression and that of the subsequent genes in the proximal part of the division and cell wall (dcw) gene cluster. Acts by binding directly to DNA. May also regulate the expression of genes outside the dcw cluster. This is Transcriptional regulator MraZ from Escherichia coli O127:H6 (strain E2348/69 / EPEC).